The sequence spans 678 residues: DNA ligase (678 aa).

NAD(+)-binding positions include 36-40 (DSEFD), 85-86 (SL), and E117. The N6-AMP-lysine intermediate role is filled by K119. R140, E177, K294, and K318 together coordinate NAD(+). 4 residues coordinate Zn(2+): C412, C415, C430, and C436. Residues 595–678 (IIDAPLLGKT…TWWQHYGNAV (84 aa)) enclose the BRCT domain.

The protein belongs to the NAD-dependent DNA ligase family. LigA subfamily. It depends on Mg(2+) as a cofactor. The cofactor is Mn(2+).

It catalyses the reaction NAD(+) + (deoxyribonucleotide)n-3'-hydroxyl + 5'-phospho-(deoxyribonucleotide)m = (deoxyribonucleotide)n+m + AMP + beta-nicotinamide D-nucleotide.. In terms of biological role, DNA ligase that catalyzes the formation of phosphodiester linkages between 5'-phosphoryl and 3'-hydroxyl groups in double-stranded DNA using NAD as a coenzyme and as the energy source for the reaction. It is essential for DNA replication and repair of damaged DNA. The protein is DNA ligase of Dichelobacter nodosus (strain VCS1703A).